The primary structure comprises 250 residues: Probable dihydroorotate dehydrogenase B (NAD(+)), electron transfer subunit (250 aa).

The 89-residue stretch at Met1–Val89 folds into the FAD-binding FR-type domain. [2Fe-2S] cluster contacts are provided by Cys200, Cys205, Cys208, and Cys216.

The protein belongs to the PyrK family. Heterotetramer of 2 PyrK and 2 PyrD type B subunits. Requires [2Fe-2S] cluster as cofactor. FAD is required as a cofactor.

The protein operates within pyrimidine metabolism; UMP biosynthesis via de novo pathway; orotate from (S)-dihydroorotate (NAD(+) route): step 1/1. In terms of biological role, responsible for channeling the electrons from the oxidation of dihydroorotate from the FMN redox center in the PyrD type B subunit to the ultimate electron acceptor NAD(+). The sequence is that of Probable dihydroorotate dehydrogenase B (NAD(+)), electron transfer subunit from Thermoplasma volcanium (strain ATCC 51530 / DSM 4299 / JCM 9571 / NBRC 15438 / GSS1).